Here is a 42-residue protein sequence, read N- to C-terminus: Tachystatin-B1 (42 aa).

3 disulfide bridges follow: Cys-4–Cys-20, Cys-11–Cys-25, and Cys-19–Cys-37.

Granular hemocytes, small secretory granules.

It is found in the secreted. Functionally, exhibits stronger antimicrobial activity against the Gram-positive bacteria (S.aureus (IC(50) is 7.4 ug/ml)) and fungi (C.albicans (IC(50) is 3.0 ug/ml) and P.pastoris (IC(50) is 0.1 ug/ml)) than Gram-negative bacteria (E.coli no inhibition at 100 ug/ml). Binds to chitin (4.3 uM are required to obtain 50% of binding). Does not cause hemolysis on sheep erythrocytes. Has no blocking activity on the P-type calcium channel. This is Tachystatin-B1 from Tachypleus tridentatus (Japanese horseshoe crab).